Reading from the N-terminus, the 432-residue chain is Glutamate-1-semialdehyde 2,1-aminomutase (432 aa).

An N6-(pyridoxal phosphate)lysine modification is found at Lys-270.

It belongs to the class-III pyridoxal-phosphate-dependent aminotransferase family. HemL subfamily. Homodimer. Requires pyridoxal 5'-phosphate as cofactor.

The protein localises to the cytoplasm. It catalyses the reaction (S)-4-amino-5-oxopentanoate = 5-aminolevulinate. The protein operates within porphyrin-containing compound metabolism; protoporphyrin-IX biosynthesis; 5-aminolevulinate from L-glutamyl-tRNA(Glu): step 2/2. This chain is Glutamate-1-semialdehyde 2,1-aminomutase, found in Acinetobacter baumannii (strain ATCC 17978 / DSM 105126 / CIP 53.77 / LMG 1025 / NCDC KC755 / 5377).